Reading from the N-terminus, the 121-residue chain is Large ribosomal subunit protein uL18 (121 aa).

It belongs to the universal ribosomal protein uL18 family. In terms of assembly, part of the 50S ribosomal subunit; part of the 5S rRNA/L5/L18/L25 subcomplex. Contacts the 5S and 23S rRNAs.

Functionally, this is one of the proteins that bind and probably mediate the attachment of the 5S RNA into the large ribosomal subunit, where it forms part of the central protuberance. In Polaromonas sp. (strain JS666 / ATCC BAA-500), this protein is Large ribosomal subunit protein uL18.